Here is a 214-residue protein sequence, read N- to C-terminus: Alpha-S1-casein (214 aa).

Positions 1–15 (MKLLILTCLVAVALA) are cleaved as a signal peptide. Ser27 is subject to Phosphoserine; in allele A. Ser56 carries the phosphoserine; in allele C modification. Ser61 and Ser63 each carry phosphoserine. Residues 69-91 (MEDAKQMKAGSSSSSEEIVPNSA) are disordered. Position 79 is a phosphoserine; in alleles A and C (Ser79). At Ser80 the chain carries Phosphoserine. Residue Ser81 is modified to Phosphoserine; in alleles A and C. The residue at position 82 (Ser82) is a Phosphoserine. Phosphoserine; in alleles A and C is present on Ser83. Ser90 carries the phosphoserine modification. Residues 105-111 (RYLGYLE) form an opioid-like peptide sequence region. Residue Ser130 is modified to Phosphoserine.

This sequence belongs to the alpha-casein family. In terms of tissue distribution, mammary gland specific. Secreted in milk.

The protein localises to the secreted. In terms of biological role, important role in the capacity of milk to transport calcium phosphate. The polypeptide is Alpha-S1-casein (CSN1S1) (Ovis aries (Sheep)).